The chain runs to 208 residues: Methylthioribulose-1-phosphate dehydratase (208 aa).

Zn(2+) is bound by residues H96 and H98.

The protein belongs to the aldolase class II family. MtnB subfamily. Zn(2+) serves as cofactor.

It catalyses the reaction 5-(methylsulfanyl)-D-ribulose 1-phosphate = 5-methylsulfanyl-2,3-dioxopentyl phosphate + H2O. It functions in the pathway amino-acid biosynthesis; L-methionine biosynthesis via salvage pathway; L-methionine from S-methyl-5-thio-alpha-D-ribose 1-phosphate: step 2/6. In terms of biological role, catalyzes the dehydration of methylthioribulose-1-phosphate (MTRu-1-P) into 2,3-diketo-5-methylthiopentyl-1-phosphate (DK-MTP-1-P). This is Methylthioribulose-1-phosphate dehydratase from Pseudomonas fluorescens (strain Pf0-1).